The sequence spans 429 residues: MKKKPFYKVLYVQVIFAIIVGVILGHFYPALATDMKPLGDGFIKLIKMVIGPIIFCTVVTGIAGMEDMKKVGRVGGKALLYFEVVSTFALLLGLAATHILRPGVGFNIDPATLDGKAVASYAAKAHGQSTVDFLLHIIPNTMVDAFAQGEILQILLIALLFGSVLAHLGERGKVVTDFIDGLTRVLFGIVHIVTKLAPIGAFGAMAFTIGKYGVGSLVPLLKLIGTFYLTSIVFVLVVLGTIARVTGFSIIRFVSYIKEELLIVLGTSSSEAALPQLMEKLEKAGCSRSVVGLVVPTGYSFNLDGTNIYMTMAVLFIAQATNIELTWMQQLTLLAVAMLTSKGASGVTGAGFITLAATLAVVPTIPLSGMVLILGIDRFMSECRALTNIVGNGVATVVVSAWEKELDRNKLRQALTGGGEVKTTEAAGV.

The next 8 membrane-spanning stretches (helical) occupy residues 9–29 (VLYV…HFYP), 45–65 (LIKM…IAGM), 79–99 (LLYF…ATHI), 149–169 (GEIL…AHLG), 185–205 (VLFG…FGAM), 223–243 (LIGT…GTIA), 308–328 (IYMT…LTWM), and 356–376 (AATL…ILGI).

Belongs to the dicarboxylate/amino acid:cation symporter (DAACS) (TC 2.A.23) family.

The protein localises to the cell inner membrane. Functionally, responsible for the transport of dicarboxylates such as succinate, fumarate, and malate from the periplasm across the membrane. This chain is C4-dicarboxylate transport protein, found in Burkholderia ambifaria (strain ATCC BAA-244 / DSM 16087 / CCUG 44356 / LMG 19182 / AMMD) (Burkholderia cepacia (strain AMMD)).